A 219-amino-acid chain; its full sequence is Ribose-5-phosphate isomerase A (219 aa).

Residues 28-31 (TGST), 81-84 (DGAD), and 94-97 (KGGG) each bind substrate. Glutamate 103 serves as the catalytic Proton acceptor. Lysine 121 serves as a coordination point for substrate.

This sequence belongs to the ribose 5-phosphate isomerase family. Homodimer.

It carries out the reaction aldehydo-D-ribose 5-phosphate = D-ribulose 5-phosphate. It functions in the pathway carbohydrate degradation; pentose phosphate pathway; D-ribose 5-phosphate from D-ribulose 5-phosphate (non-oxidative stage): step 1/1. Catalyzes the reversible conversion of ribose-5-phosphate to ribulose 5-phosphate. This Enterobacter cloacae protein is Ribose-5-phosphate isomerase A.